Consider the following 225-residue polypeptide: Membrane protein (225 aa).

The Virion surface portion of the chain corresponds to 1-20 (MSNETNCTLDFEQSVELFKE). A helical transmembrane segment spans residues 21–41 (YNLFITAFLLFLTIILQYGYA). The Intravirion segment spans residues 42-51 (TRSKFIYILK). The helical transmembrane segment at 52-72 (MIVLWCFWPLNIAVGVISCIY) threads the bilayer. The Virion surface segment spans residues 73–77 (PPNTG). A helical transmembrane segment spans residues 78-98 (GLVAAIILTVFACLSFVGYWI). The Intravirion segment spans residues 99–225 (QSIRLFKRCR…VATGGSSLYT (127 aa)).

It belongs to the gammacoronaviruses M protein family. In terms of assembly, homomultimer. Interacts with envelope E protein in the budding compartment of the host cell, which is located between endoplasmic reticulum and the Golgi complex. Forms a complex with HE and S proteins. Interacts with nucleocapsid N protein. This interaction probably participates in RNA packaging into the virus.

It localises to the virion membrane. Its subcellular location is the host Golgi apparatus membrane. Functionally, component of the viral envelope that plays a central role in virus morphogenesis and assembly via its interactions with other viral proteins. The chain is Membrane protein from Gallus gallus (Chicken).